Consider the following 882-residue polypeptide: Homeobox-leucine zipper protein ROC3 (882 aa).

Residues 104–144 (DVDDDHKPQHSGHDQPPDAAQPSGAAGGNAKKKRYHRHTAH) form a disordered region. A compositionally biased stretch (basic and acidic residues) spans 107–119 (DDHKPQHSGHDQP). Over residues 133–143 (AKKKRYHRHTA) the composition is skewed to basic residues. Residues 134 to 193 (KKKRYHRHTAHQIQQMEALFKECPHPDDKQRLKLSQELGLKPRQVKFWFQNRRTQMKAQQ) constitute a DNA-binding region (homeobox). Positions 200–263 (ILRAENENLK…LDRLACIATR (64 aa)) form a coiled coil. The 245-residue stretch at 340–584 (QEQDKQLVVD…LQRQCERLAS (245 aa)) folds into the START domain. The segment covering 782 to 816 (AAAPTISSSTTTTTGNGNGETSSTPPRNSSSNNNN) has biased composition (low complexity). The segment at 782-820 (AAAPTISSSTTTTTGNGNGETSSTPPRNSSSNNNNADEL) is disordered.

Belongs to the HD-ZIP homeobox family. Class IV subfamily.

Its subcellular location is the nucleus. In terms of biological role, probable transcription factor. The protein is Homeobox-leucine zipper protein ROC3 (ROC3) of Oryza sativa subsp. japonica (Rice).